The chain runs to 108 residues: Nucleoid-associated protein Bcen_6253 (108 aa).

Over residues A85 to T95 the composition is skewed to polar residues. Residues A85 to F108 form a disordered region. Pro residues predominate over residues P99 to F108.

It belongs to the YbaB/EbfC family. Homodimer.

Its subcellular location is the cytoplasm. It localises to the nucleoid. Binds to DNA and alters its conformation. May be involved in regulation of gene expression, nucleoid organization and DNA protection. The polypeptide is Nucleoid-associated protein Bcen_6253 (Burkholderia orbicola (strain AU 1054)).